A 291-amino-acid polypeptide reads, in one-letter code: Small ribosomal subunit protein uS2 (291 aa).

Residues A255–W291 form a disordered region.

It belongs to the universal ribosomal protein uS2 family. In terms of assembly, component of the small ribosomal subunit. Mature ribosomes consist of a small (40S) and a large (60S) subunit. The 40S subunit contains about 33 different proteins and 1 molecule of RNA (18S). The 60S subunit contains about 49 different proteins and 3 molecules of RNA (25S, 5.8S and 5S). Interacts with RPS21.

Its subcellular location is the cytoplasm. Required for the assembly and/or stability of the 40S ribosomal subunit. Required for the processing of the 20S rRNA-precursor to mature 18S rRNA in a late step of the maturation of 40S ribosomal subunits. The chain is Small ribosomal subunit protein uS2 from Podospora anserina (strain S / ATCC MYA-4624 / DSM 980 / FGSC 10383) (Pleurage anserina).